A 705-amino-acid chain; its full sequence is Elongation factor G (705 aa).

The region spanning 8–290 (HRYRNIGIMA…GVIHLLPSPA (283 aa)) is the tr-type G domain. Residues 17-24 (AHIDAGKT), 88-92 (DTPGH), and 142-145 (NKMD) each bind GTP.

It belongs to the TRAFAC class translation factor GTPase superfamily. Classic translation factor GTPase family. EF-G/EF-2 subfamily.

The protein resides in the cytoplasm. In terms of biological role, catalyzes the GTP-dependent ribosomal translocation step during translation elongation. During this step, the ribosome changes from the pre-translocational (PRE) to the post-translocational (POST) state as the newly formed A-site-bound peptidyl-tRNA and P-site-bound deacylated tRNA move to the P and E sites, respectively. Catalyzes the coordinated movement of the two tRNA molecules, the mRNA and conformational changes in the ribosome. This Xylella fastidiosa (strain M12) protein is Elongation factor G.